Here is a 225-residue protein sequence, read N- to C-terminus: MKLQFFSFITLFACLFTTAIFAKEDTAEDPEITHKVYFDINHGDKQIGRIVMGLYGLTTPQTVENFYQLTISRDPKMGYLNSIFHRVIPNFMIQGGDFTHRSGIGGKSIFGNTFKDENFDVKHDKPGRLSMANRGKNTNGSQFFITTVPCPWLDGKHVVFGEVLDGMDVVHYIENVKTDSRNMPVKEVIIVESGELETVPLDNKDAAKLQEEIKAEASEAAHDEL.

Residues 1 to 22 (MKLQFFSFITLFACLFTTAIFA) form the signal peptide. The PPIase cyclophilin-type domain occupies 37 to 195 (YFDINHGDKQ…KEVIIVESGE (159 aa)). The N-linked (GlcNAc...) asparagine glycan is linked to Asn-139. A Prevents secretion from ER motif is present at residues 222–225 (HDEL).

Belongs to the cyclophilin-type PPIase family. PPIase B subfamily.

Its subcellular location is the endoplasmic reticulum lumen. It carries out the reaction [protein]-peptidylproline (omega=180) = [protein]-peptidylproline (omega=0). Its function is as follows. PPIases accelerate the folding of proteins. It catalyzes the cis-trans isomerization of proline imidic peptide bonds in oligopeptides. The polypeptide is Peptidyl-prolyl cis-trans isomerase D (Saccharomyces cerevisiae (strain ATCC 204508 / S288c) (Baker's yeast)).